The chain runs to 351 residues: Dihydroorotate dehydrogenase (quinone) (351 aa).

Residues A67–K71 and T91 each bind FMN. K71 is a substrate binding site. N116 to F120 is a substrate binding site. N145 and N178 together coordinate FMN. N178 is a binding site for substrate. The Nucleophile role is filled by S181. A substrate-binding site is contributed by N183. Positions 214 and 242 each coordinate FMN. N243–T244 provides a ligand contact to substrate. FMN contacts are provided by residues G262, G291, and Y312–T313.

Belongs to the dihydroorotate dehydrogenase family. Type 2 subfamily. In terms of assembly, monomer. Requires FMN as cofactor.

It is found in the cell membrane. It carries out the reaction (S)-dihydroorotate + a quinone = orotate + a quinol. It participates in pyrimidine metabolism; UMP biosynthesis via de novo pathway; orotate from (S)-dihydroorotate (quinone route): step 1/1. Functionally, catalyzes the conversion of dihydroorotate to orotate with quinone as electron acceptor. The sequence is that of Dihydroorotate dehydrogenase (quinone) from Nitratiruptor sp. (strain SB155-2).